The following is a 599-amino-acid chain: Translation initiation factor IF-2 (599 aa).

The tr-type G domain maps to 111 to 278 (PRPPIITVMG…SILLLAEILE (168 aa)). The interval 120 to 127 (GHVDHGKT) is G1. Position 120–127 (120–127 (GHVDHGKT)) interacts with GTP. A G2 region spans residues 145-149 (GITQH). Residues 166 to 169 (DTPG) form a G3 region. Residues 166–170 (DTPGH) and 220–223 (NKMD) contribute to the GTP site. The segment at 220–223 (NKMD) is G4. The interval 256–258 (SAL) is G5.

It belongs to the TRAFAC class translation factor GTPase superfamily. Classic translation factor GTPase family. IF-2 subfamily.

It localises to the cytoplasm. Its function is as follows. One of the essential components for the initiation of protein synthesis. Protects formylmethionyl-tRNA from spontaneous hydrolysis and promotes its binding to the 30S ribosomal subunits. Also involved in the hydrolysis of GTP during the formation of the 70S ribosomal complex. The protein is Translation initiation factor IF-2 of Mesomycoplasma hyopneumoniae (strain 7448) (Mycoplasma hyopneumoniae).